Here is a 325-residue protein sequence, read N- to C-terminus: Porphobilinogen deaminase (325 aa).

The residue at position 253 (cysteine 253) is an S-(dipyrrolylmethanemethyl)cysteine.

Belongs to the HMBS family. Dipyrromethane serves as cofactor.

The enzyme catalyses 4 porphobilinogen + H2O = hydroxymethylbilane + 4 NH4(+). It participates in porphyrin-containing compound metabolism; protoporphyrin-IX biosynthesis; coproporphyrinogen-III from 5-aminolevulinate: step 2/4. In terms of biological role, tetrapolymerization of the monopyrrole PBG into the hydroxymethylbilane pre-uroporphyrinogen in several discrete steps. In Dictyostelium discoideum (Social amoeba), this protein is Porphobilinogen deaminase (hemC).